The sequence spans 343 residues: Anthranilate phosphoribosyltransferase (343 aa).

5-phospho-alpha-D-ribose 1-diphosphate-binding positions include Gly-86, 89–90, Thr-94, 96–99, 114–122, and Ser-126; these read GD, NIST, and KHGNRSASG. Position 86 (Gly-86) interacts with anthranilate. A Mg(2+)-binding site is contributed by Ser-98. Position 117 (Asn-117) interacts with anthranilate. Residue Arg-172 coordinates anthranilate. Residues Asp-231 and Glu-232 each coordinate Mg(2+).

The protein belongs to the anthranilate phosphoribosyltransferase family. Homodimer. It depends on Mg(2+) as a cofactor.

It catalyses the reaction N-(5-phospho-beta-D-ribosyl)anthranilate + diphosphate = 5-phospho-alpha-D-ribose 1-diphosphate + anthranilate. Its pathway is amino-acid biosynthesis; L-tryptophan biosynthesis; L-tryptophan from chorismate: step 2/5. Functionally, catalyzes the transfer of the phosphoribosyl group of 5-phosphorylribose-1-pyrophosphate (PRPP) to anthranilate to yield N-(5'-phosphoribosyl)-anthranilate (PRA). This is Anthranilate phosphoribosyltransferase from Synechococcus sp. (strain JA-2-3B'a(2-13)) (Cyanobacteria bacterium Yellowstone B-Prime).